The chain runs to 757 residues: Relaxin receptor 1 (757 aa).

The Extracellular segment spans residues 1–408 (MTSGSVFFYI…LENLLASIIQ (408 aa)). The region spanning 26-63 (KCSLGYFPCGNITKCLPQLLHCNGVDDCGNQADEDNCG) is the LDL-receptor class A domain. Cystine bridges form between Cys-27–Cys-40, Cys-34–Cys-53, and Cys-47–Cys-62. A glycan (N-linked (GlcNAc...) asparagine) is linked at Asn-36. Positions 45, 48, 50, 52, 58, and 59 each coordinate Ca(2+). Positions 91–127 (ETPECLVGSVPVQCLCRGLELDCDETNLRAVPSVSSN) constitute an LRRNT domain. Asn-127 is a glycosylation site (N-linked (GlcNAc...) asparagine). 9 LRR repeats span residues 151–172 (DLQKLYLQNNKITSISIYAFRG), 175–196 (SLTKLYLSHNRITFLKPGVFED), 199–220 (RLEWLIIEDNHLSRISPPTFYG), 223–244 (SLILLVLMNNVLTRLPDKPLCQ), 248–269 (RLHWLDLEGNHIHNLRNLTLIS), 272–293 (NLTVLVMGKNKINHLNENTFAP), 296–317 (KLDELDLGSNKIENLPPLIFKD), 320–341 (ELSQLNLSYNPIQKIQANQFDY), and 344–365 (KLKSLSLEGIEISNIQQRMFRP). N-linked (GlcNAc...) asparagine glycosylation is found at Asn-264 and Asn-272. Asn-325 carries an N-linked (GlcNAc...) asparagine glycan. Asn-368 carries an N-linked (GlcNAc...) asparagine glycan. The chain crosses the membrane as a helical span at residues 409–429 (RVFVWVVSAVTCFGNVFVICM). Over 430–443 (RPYIRSENKLYAMS) the chain is Cytoplasmic. The helical transmembrane segment at 444 to 464 (IISLCCADCLMGIYLFVIGGF) threads the bilayer. The Extracellular segment spans residues 465–486 (DLKFRGEYNKHAQLWMESTHCQ). Cysteines 485 and 563 form a disulfide. Residues 487-507 (LVGSLAILSTEVSVLLLTFLT) traverse the membrane as a helical segment. At 508 to 527 (LEKYICIVYPFRCVRPGKCR) the chain is on the cytoplasmic side. Residues 528–548 (TITVLILIWITGFIVAFIPLS) traverse the membrane as a helical segment. Residues 549 to 577 (NKEFFKNYYGTNGVCFPLHSEDTESIGAQ) are Extracellular-facing. A helical membrane pass occupies residues 578-598 (VYSVAIFLGINLAAFIIIVFS). Residues 599-629 (YGSMFYSVHQSAITATEIRNQVKKEMILAKR) lie on the Cytoplasmic side of the membrane. Residues 630-650 (FFFIVFTDALCWIPIFVVKFL) traverse the membrane as a helical segment. Topologically, residues 651 to 660 (SLLQVEIPGT) are extracellular. The helical transmembrane segment at 661–681 (ITSWVVIFILPINSALNPILY) threads the bilayer. Over 682–757 (TLTTRPFKEM…SQSTRLNSYS (76 aa)) the chain is Cytoplasmic.

Belongs to the G-protein coupled receptor 1 family. In terms of assembly, interacts with C1QTNF8.

It localises to the cell membrane. In terms of biological role, receptor for relaxins. The activity of this receptor is mediated by G proteins leading to stimulation of adenylate cyclase and an increase of cAMP. Binding of the ligand may also activate a tyrosine kinase pathway that inhibits the activity of a phosphodiesterase that degrades cAMP. This Pongo abelii (Sumatran orangutan) protein is Relaxin receptor 1 (RXFP1).